Reading from the N-terminus, the 261-residue chain is Thiamine thiazole synthase (261 aa).

NAD(+) contacts are provided by residues Ala-33, 52 to 53 (ER), Gly-60, Val-124, and 152 to 154 (HVD). Fe cation is bound by residues Asp-154 and His-169. Ile-219 contacts NAD(+). Position 229 (Arg-229) interacts with glycine.

Belongs to the THI4 family. Homooctamer; tetramer of dimers. The cofactor is Fe(2+).

It catalyses the reaction hydrogen sulfide + glycine + NAD(+) = ADP-5-ethyl-4-methylthiazole-2-carboxylate + nicotinamide + 3 H2O + H(+). Its pathway is cofactor biosynthesis; thiamine diphosphate biosynthesis. Functionally, involved in the biosynthesis of the thiazole moiety of thiamine. Catalyzes the conversion of NAD and glycine to adenosine diphosphate 5-(2-hydroxyethyl)-4-methylthiazole-2-carboxylate (ADT), an adenylated thiazole intermediate, using free sulfide as a source of sulfur. This is Thiamine thiazole synthase from Pyrobaculum aerophilum (strain ATCC 51768 / DSM 7523 / JCM 9630 / CIP 104966 / NBRC 100827 / IM2).